The sequence spans 207 residues: Dephospho-CoA kinase (207 aa).

The region spanning 10-207 (ILGLTGGIGS…FYLTLRGGQS (198 aa)) is the DPCK domain. 18–23 (GSGKSA) provides a ligand contact to ATP.

This sequence belongs to the CoaE family.

The protein resides in the cytoplasm. The catalysed reaction is 3'-dephospho-CoA + ATP = ADP + CoA + H(+). It functions in the pathway cofactor biosynthesis; coenzyme A biosynthesis; CoA from (R)-pantothenate: step 5/5. In terms of biological role, catalyzes the phosphorylation of the 3'-hydroxyl group of dephosphocoenzyme A to form coenzyme A. The sequence is that of Dephospho-CoA kinase from Pseudomonas syringae pv. syringae (strain B728a).